Consider the following 70-residue polypeptide: Sec-independent protein translocase protein TatA (70 aa).

Residues 1–21 form a helical membrane-spanning segment; it reads MAIGVNQLLIILVIIVLLFGA.

The protein belongs to the TatA/E family. As to quaternary structure, the Tat system comprises two distinct complexes: a TatABC complex, containing multiple copies of TatA, TatB and TatC subunits, and a separate TatA complex, containing only TatA subunits. Substrates initially bind to the TatABC complex, which probably triggers association of the separate TatA complex to form the active translocon.

The protein resides in the cell inner membrane. Functionally, part of the twin-arginine translocation (Tat) system that transports large folded proteins containing a characteristic twin-arginine motif in their signal peptide across membranes. TatA could form the protein-conducting channel of the Tat system. The sequence is that of Sec-independent protein translocase protein TatA from Campylobacter curvus (strain 525.92).